The primary structure comprises 127 residues: DNA-directed RNA polymerase subunit omega (127 aa).

Belongs to the RNA polymerase subunit omega family. As to quaternary structure, the RNAP catalytic core consists of 2 alpha, 1 beta, 1 beta' and 1 omega subunit. When a sigma factor is associated with the core the holoenzyme is formed, which can initiate transcription.

The enzyme catalyses RNA(n) + a ribonucleoside 5'-triphosphate = RNA(n+1) + diphosphate. In terms of biological role, promotes RNA polymerase assembly. Latches the N- and C-terminal regions of the beta' subunit thereby facilitating its interaction with the beta and alpha subunits. This Rickettsia peacockii (strain Rustic) protein is DNA-directed RNA polymerase subunit omega.